The chain runs to 72 residues: DNA-directed RNA polymerase subunit omega (72 aa).

Belongs to the RNA polymerase subunit omega family. The RNAP catalytic core consists of 2 alpha, 1 beta, 1 beta' and 1 omega subunit. When a sigma factor is associated with the core the holoenzyme is formed, which can initiate transcription.

The enzyme catalyses RNA(n) + a ribonucleoside 5'-triphosphate = RNA(n+1) + diphosphate. Promotes RNA polymerase assembly. Latches the N- and C-terminal regions of the beta' subunit thereby facilitating its interaction with the beta and alpha subunits. In Francisella tularensis subsp. tularensis (strain FSC 198), this protein is DNA-directed RNA polymerase subunit omega.